We begin with the raw amino-acid sequence, 315 residues long: MSNTEERCDLSSSRDCPERHEHLLQRVTARAAEIGGGITVSRLMPSRQRRMIGAWCFLDHAGPAEFEPGGGLAVGPHPHIGLQTFTWMIQGEALHRDSLGNVQVIRPGQVNLMTAGHGIAHTEESLPDERHAHAAQLWIALPYEQRDIAPAFDHHPDLPRWQEQGVTFTLLAGALAGRQAPCRLYSPLLGADLACHDASTLQLTLDPHFEYGLLPLEGGLEVGGEHFAVNELAYLGDGRDGLQLQLDPGARVLLLGGAPFGAEIFMWWNFVGHSKGEIARAQKAWEEGDARFGRLDALEGPRLSAPPIPWKIDAE.

Residues H77, H79, H121, and E123 each coordinate a divalent metal cation.

Belongs to the pirin family. Requires a divalent metal cation as cofactor.

The enzyme catalyses quercetin + O2 = 2-(3,4-dihydroxybenzoyloxy)-4,6-dihydroxybenzoate + CO. The protein operates within flavonoid metabolism; quercetin degradation. Putative quercetin 2,3-dioxygenase. The protein is Putative quercetin 2,3-dioxygenase PA1205 of Pseudomonas aeruginosa (strain ATCC 15692 / DSM 22644 / CIP 104116 / JCM 14847 / LMG 12228 / 1C / PRS 101 / PAO1).